Here is a 257-residue protein sequence, read N- to C-terminus: Neurotrophin-3 (257 aa).

The signal sequence occupies residues 1–18 (MSILFYMIFLAYLRGIQG). Positions 19 to 138 (NSMDQRRLPE…VANRTARRKR (120 aa)) are excised as a propeptide. The interval 61–81 (STLPKAEAPREPERGEPAKSE) is disordered. A compositionally biased stretch (basic and acidic residues) spans 67 to 79 (EAPREPERGEPAK). Residue Asn-131 is glycosylated (N-linked (GlcNAc...) asparagine). 3 disulfides stabilise this stretch: Cys-152/Cys-217, Cys-195/Cys-246, and Cys-205/Cys-248.

Belongs to the NGF-beta family.

Its subcellular location is the secreted. Its function is as follows. Seems to promote the survival of visceral and proprioceptive sensory neurons. The polypeptide is Neurotrophin-3 (NTF3) (Sus scrofa (Pig)).